Here is a 282-residue protein sequence, read N- to C-terminus: Nucleotide-binding protein XCC2806 (282 aa).

5–12 contributes to the ATP binding site; sequence GLSGSGKS. 57-60 lines the GTP pocket; sequence DVRS.

This sequence belongs to the RapZ-like family.

Functionally, displays ATPase and GTPase activities. The sequence is that of Nucleotide-binding protein XCC2806 from Xanthomonas campestris pv. campestris (strain ATCC 33913 / DSM 3586 / NCPPB 528 / LMG 568 / P 25).